We begin with the raw amino-acid sequence, 455 residues long: Probable Xaa-Pro aminopeptidase GSTUM_00008071001 (455 aa).

Asp251, Asp262, Glu386, and Glu426 together coordinate Mn(2+).

This sequence belongs to the peptidase M24B family. Mn(2+) is required as a cofactor.

It carries out the reaction Release of any N-terminal amino acid, including proline, that is linked to proline, even from a dipeptide or tripeptide.. Its function is as follows. Catalyzes the removal of a penultimate prolyl residue from the N-termini of peptides. The sequence is that of Probable Xaa-Pro aminopeptidase GSTUM_00008071001 from Tuber melanosporum (strain Mel28) (Perigord black truffle).